Reading from the N-terminus, the 160-residue chain is Transcription antitermination protein NusB (160 aa).

It belongs to the NusB family.

Its function is as follows. Involved in transcription antitermination. Required for transcription of ribosomal RNA (rRNA) genes. Binds specifically to the boxA antiterminator sequence of the ribosomal RNA (rrn) operons. The chain is Transcription antitermination protein NusB from Nitrobacter hamburgensis (strain DSM 10229 / NCIMB 13809 / X14).